We begin with the raw amino-acid sequence, 525 residues long: GMP synthase [glutamine-hydrolyzing] (525 aa).

In terms of domain architecture, Glutamine amidotransferase type-1 spans 9 to 207 (RILILDFGSQ…ILDICGCEAL (199 aa)). Catalysis depends on Cys-86, which acts as the Nucleophile. Catalysis depends on residues His-181 and Glu-183. The GMPS ATP-PPase domain maps to 208-400 (WTPSKIAEDA…LGLPYDMVYR (193 aa)). 235 to 241 (SGGVDSS) contacts ATP.

In terms of assembly, homodimer.

It catalyses the reaction XMP + L-glutamine + ATP + H2O = GMP + L-glutamate + AMP + diphosphate + 2 H(+). Its pathway is purine metabolism; GMP biosynthesis; GMP from XMP (L-Gln route): step 1/1. Catalyzes the synthesis of GMP from XMP. This is GMP synthase [glutamine-hydrolyzing] from Pseudomonas fluorescens (strain ATCC BAA-477 / NRRL B-23932 / Pf-5).